The chain runs to 565 residues: E3 ubiquitin-protein ligase RNF168 (565 aa).

An RING-type zinc finger spans residues 16–55 (CGICMEILLEPVTLPCNHTLCNPCFQSTVEKANLCCPFCR). Ser-70 bears the Phosphoserine mark. The LR motif 1 signature appears at 110–128 (LSEPGELRREYEEEISRVE). Ser-134 is modified (phosphoserine). Positions 143–151 (EEYIQRLLA) match the UMI motif motif. 2 disordered regions span residues 150–223 (LAEE…KTFG) and 252–302 (SKET…PQLC). The span at 157 to 179 (EKRQREKRRSEMEEQLRGDEELA) shows a compositional bias: basic and acidic residues. Residues 168 to 191 (MEEQLRGDEELARSLSTSINSNYE) carry the MIU motif 1 motif. A compositionally biased stretch (polar residues) spans 181-201 (SLSTSINSNYERNTLASPLSS). Ser-197 bears the Phosphoserine mark. Residue Lys-210 forms a Glycyl lysine isopeptide (Lys-Gly) (interchain with G-Cter in SUMO2) linkage. Positions 275–293 (PTLSPQTCLETQEQGSESS) are enriched in polar residues. 2 positions are modified to phosphoserine: Ser-413 and Ser-414. An MIU motif 2 motif is present at residues 438 to 461 (RHKQEEQDRLLALQLQKEVDKEQM). A disordered region spans residues 458-521 (KEQMVPNRQK…TKGDYWEPFK (64 aa)). Residues 465–476 (RQKGSPDQYQLR) carry the LR motif 2 motif. Positions 466–477 (QKGSPDQYQLRT) are enriched in polar residues. Ser-469 bears the Phosphoserine mark. Basic and acidic residues predominate over residues 504–518 (DHSKSPRNTKGDYWE). Lys-525 is covalently cross-linked (Glycyl lysine isopeptide (Lys-Gly) (interchain with G-Cter in SUMO2)).

This sequence belongs to the RNF168 family. As to quaternary structure, monomer. Interacts with UBE2N/UBC13. Post-translationally, sumoylated with SUMO1 by PIAS4 in response to double-strand breaks (DSBs). In terms of processing, ubiquitinated.

The protein localises to the nucleus. It carries out the reaction S-ubiquitinyl-[E2 ubiquitin-conjugating enzyme]-L-cysteine + [acceptor protein]-L-lysine = [E2 ubiquitin-conjugating enzyme]-L-cysteine + N(6)-ubiquitinyl-[acceptor protein]-L-lysine.. The protein operates within protein modification; protein ubiquitination. Functionally, E3 ubiquitin-protein ligase required for accumulation of repair proteins to sites of DNA damage. Acts with UBE2N/UBC13 to amplify the RNF8-dependent histone ubiquitination. Recruited to sites of DNA damage at double-strand breaks (DSBs) by binding to ubiquitinated histone H2A and H2AX and amplifies the RNF8-dependent H2A ubiquitination, promoting the formation of 'Lys-63'-linked ubiquitin conjugates. This leads to concentrate ubiquitinated histones H2A and H2AX at DNA lesions to the threshold required for recruitment of TP53BP1 and BRCA1. Also recruited at DNA interstrand cross-links (ICLs) sites and promotes accumulation of 'Lys-63'-linked ubiquitination of histones H2A and H2AX, leading to recruitment of FAAP20 and Fanconi anemia (FA) complex, followed by interstrand cross-link repair. H2A ubiquitination also mediates the ATM-dependent transcriptional silencing at regions flanking DSBs in cis, a mechanism to avoid collision between transcription and repair intermediates. Also involved in class switch recombination in immune system, via its role in regulation of DSBs repair. Following DNA damage, promotes the ubiquitination and degradation of JMJD2A/KDM4A in collaboration with RNF8, leading to unmask H4K20me2 mark and promote the recruitment of TP53BP1 at DNA damage sites. Not able to initiate 'Lys-63'-linked ubiquitination in vitro; possibly due to partial occlusion of the UBE2N/UBC13-binding region. Catalyzes monoubiquitination of 'Lys-13' and 'Lys-15' of nucleosomal histone H2A (H2AK13Ub and H2AK15Ub, respectively). The chain is E3 ubiquitin-protein ligase RNF168 from Mus musculus (Mouse).